Consider the following 20-residue polypeptide: Thylakoid lumenal 14.7 kDa protein (20 aa).

Residues Lys1–Val20 form a disordered region. Residues Leu9–Val20 show a composition bias toward basic and acidic residues.

The protein resides in the plastid. It localises to the chloroplast thylakoid lumen. This Spinacia oleracea (Spinach) protein is Thylakoid lumenal 14.7 kDa protein.